The following is a 284-amino-acid chain: 16S rRNA (guanine(1405)-N(7))-methyltransferase (284 aa).

S-adenosyl-L-methionine-binding positions include tyrosine 73, 111–113 (HAS), arginine 117, alanine 142, aspartate 165, 191–192 (DL), leucine 208, and glutamine 217.

The protein belongs to the methyltransferase superfamily. Aminoglycoside resistance family.

It catalyses the reaction guanosine(1405) in 16S rRNA + S-adenosyl-L-methionine = N(7)-methylguanosine(1405) in 16S rRNA + S-adenosyl-L-homocysteine. Functionally, specifically methylates the N(7) position of guanine 1405 in 16S rRNA. Confers resistance to various aminoglycosides, including gentamicin and kanamycin. In Frankia casuarinae (strain DSM 45818 / CECT 9043 / HFP020203 / CcI3), this protein is 16S rRNA (guanine(1405)-N(7))-methyltransferase (Krm).